The sequence spans 414 residues: 26S proteasome regulatory subunit 6B homolog (414 aa).

The segment at 1-33 (MAATMVLDPKPSSTPPPTLPNPYTTDSQSTDSE) is disordered. Positions 21–30 (NPYTTDSQST) are enriched in low complexity. Positions 55 to 81 (EYVKDELKNLKREQLRSQEEVKRIQSV) form a coiled coil. 202–209 (GPPGTGKT) serves as a coordination point for ATP.

The protein belongs to the AAA ATPase family.

The protein localises to the cytoplasm. The protein resides in the nucleus. In terms of biological role, the 26S proteasome is involved in the ATP-dependent degradation of ubiquitinated proteins. The regulatory (or ATPase) complex confers ATP dependency and substrate specificity to the 26S complex. The chain is 26S proteasome regulatory subunit 6B homolog from Helianthus annuus (Common sunflower).